A 798-amino-acid polypeptide reads, in one-letter code: Integrin beta-5 (798 aa).

The N-terminal stretch at Met-1–Ala-23 is a signal peptide. Over Gly-24–Asn-719 the chain is Extracellular. Residues Ile-27–Glu-76 form the PSI domain. 19 cysteine pairs are disulfide-bonded: Cys-28–Cys-46, Cys-36–Cys-463, Cys-39–Cys-64, Cys-49–Cys-75, Cys-202–Cys-211, Cys-259–Cys-300, Cys-401–Cys-413, Cys-433–Cys-461, Cys-465–Cys-484, Cys-476–Cys-487, Cys-489–Cys-498, Cys-500–Cys-530, Cys-513–Cys-528, Cys-522–Cys-533, Cys-535–Cys-548, Cys-550–Cys-571, Cys-555–Cys-569, Cys-563–Cys-574, and Cys-576–Cys-585. In terms of domain architecture, VWFA spans Tyr-136–Ile-378. Mg(2+) is bound by residues Ser-147 and Ser-149. Residues Ser-149, Asp-152, Asp-153, and Asp-184 each coordinate Ca(2+). Asn-242, Asp-244, Pro-246, and Glu-247 together coordinate Ca(2+). Glu-247 is a Mg(2+) binding site. Asn-347 carries an N-linked (GlcNAc...) asparagine glycan. Gly-362 is a binding site for Ca(2+). N-linked (GlcNAc...) asparagine glycans are attached at residues Asn-460 and Asn-479. I-EGF domains are found at residues Cys-465–Glu-499, Cys-500–Glu-549, Cys-550–Asn-586, and Cys-587–Glu-626. N-linked (GlcNAc...) asparagine glycosylation occurs at Asn-505. Residue Asn-586 is glycosylated (N-linked (GlcNAc...) asparagine). Disulfide bonds link Cys-587–Cys-610, Cys-594–Cys-608, Cys-602–Cys-613, Cys-615–Cys-625, Cys-628–Cys-631, Cys-635–Cys-682, Cys-641–Cys-661, Cys-644–Cys-657, and Cys-690–Cys-714. 2 N-linked (GlcNAc...) asparagine glycosylation sites follow: Asn-654 and Asn-705. A helical membrane pass occupies residues Ala-720–Trp-742. Over Lys-743 to Val-798 the chain is Cytoplasmic. The residue at position 770 (Ser-770) is a Phosphoserine.

This sequence belongs to the integrin beta chain family. In terms of assembly, heterodimer of an alpha and a beta subunit. Beta-5 (ITGB5) associates with alpha-V (ITGAV). Interacts with MYO10. Interacts with DAB2. Integrin ITGAV:ITGB5 interacts with FBLN5 (via N-terminus). ITGAV:ITGB5 interacts with CCN3. Interacts with tensin TNS3; TNS3 also interacts with PEAK1, thus acting as an adapter molecule to bridge the association of PEAK1 with ITGB5.

Its subcellular location is the cell membrane. Integrin alpha-V/beta-5 (ITGAV:ITGB5) is a receptor for fibronectin. It recognizes the sequence R-G-D in its ligand. The chain is Integrin beta-5 (Itgb5) from Mus musculus (Mouse).